The following is a 148-amino-acid chain: Protein ADM2 (148 aa).

An N-terminal signal peptide occupies residues 1–24 (MARIPTAALGCISLLCLQLPGSLS). Residues 25–98 (RSLGGDPRPV…HSGPRRHSGP (74 aa)) constitute a propeptide that is removed on maturation. Disordered regions lie at residues 26–57 (SLGG…APRP) and 70–101 (RGAG…PRRT). An intrachain disulfide couples Cys110 to Cys115. At Tyr147 the chain carries Tyrosine amide.

This sequence belongs to the adrenomedullin family. As to expression, expressed in the esophagus, stomach, jejunum, ileum, ileocecum, ascending colon, transverse colon, descending colon and rectum. Expressed in myocardial cells of the heart, renal tubular cells, hypothalamus, and pituitary.

It is found in the secreted. Functionally, intermedin/ADM2 is a peptide hormone that plays a role as physiological regulator of gastrointestinal and cardiovascular bioactivities mediated by the CALCRL-RAMPs receptor complexes. Activates the cAMP-dependent pathway through interaction with CALCRL-RAMP3 receptor complex. In Homo sapiens (Human), this protein is Protein ADM2.